We begin with the raw amino-acid sequence, 152 residues long: Ubiquitin-conjugating enzyme E2 2 (152 aa).

The region spanning 4 to 150 is the UBC core domain; that stretch reads PARKRLMRDF…VREVVEQSWT (147 aa). Cysteine 88 acts as the Glycyl thioester intermediate in catalysis.

Belongs to the ubiquitin-conjugating enzyme family. As to expression, expressed in all tissues examined. Lower levels found in leaves.

The catalysed reaction is S-ubiquitinyl-[E1 ubiquitin-activating enzyme]-L-cysteine + [E2 ubiquitin-conjugating enzyme]-L-cysteine = [E1 ubiquitin-activating enzyme]-L-cysteine + S-ubiquitinyl-[E2 ubiquitin-conjugating enzyme]-L-cysteine.. The protein operates within protein modification; protein ubiquitination. Functionally, accepts the ubiquitin from the E1 complex and catalyzes its covalent attachment to other proteins. This is Ubiquitin-conjugating enzyme E2 2 (UBC2) from Arabidopsis thaliana (Mouse-ear cress).